A 278-amino-acid polypeptide reads, in one-letter code: Urease accessory protein UreD (278 aa).

The protein belongs to the UreD family. UreD, UreF and UreG form a complex that acts as a GTP-hydrolysis-dependent molecular chaperone, activating the urease apoprotein by helping to assemble the nickel containing metallocenter of UreC. The UreE protein probably delivers the nickel.

The protein localises to the cytoplasm. Its function is as follows. Required for maturation of urease via the functional incorporation of the urease nickel metallocenter. The sequence is that of Urease accessory protein UreD from Staphylococcus aureus (strain bovine RF122 / ET3-1).